The primary structure comprises 349 residues: uncharacterized protein (349 aa).

Residues 1–25 (MNKYIKQGAPILGILLAVMFGGREG) form the signal peptide.

This sequence belongs to the bacterial solute-binding protein 1 family. WtpA subfamily.

This is an uncharacterized protein from Methanococcus aeolicus (strain ATCC BAA-1280 / DSM 17508 / OCM 812 / Nankai-3).